An 80-amino-acid polypeptide reads, in one-letter code: U-Asilidin(1)-Dg12 (80 aa).

A signal peptide spans 1–24; it reads MARLLVVSVGVFLAVIMLSSETMS. A propeptide spanning residues 25-46 is cleaved from the precursor; that stretch reads LPAGENLPALTLFEAQNQLIGL. 3 disulfides stabilise this stretch: Cys-53–Cys-67, Cys-60–Cys-71, and Cys-66–Cys-78.

The protein belongs to the asilidin-1 family. In terms of tissue distribution, expressed by the venom gland.

The protein localises to the secreted. In terms of biological role, neurotoxin that may modulate ions channels (other than those tested). In vivo, induces neurotoxic effects when injected into insects (tested on L.cuprina and A.domesticus). The sequence is that of U-Asilidin(1)-Dg12 from Dolopus genitalis (Giant Australian assassin fly).